Here is a 755-residue protein sequence, read N- to C-terminus: Xaa-Pro dipeptidyl-peptidase (755 aa).

Residues serine 348, aspartate 468, and histidine 498 each act as charge relay system in the active site.

It belongs to the peptidase S15 family. As to quaternary structure, homodimer.

It localises to the cytoplasm. It catalyses the reaction Hydrolyzes Xaa-Pro-|- bonds to release unblocked, N-terminal dipeptides from substrates including Ala-Pro-|-p-nitroanilide and (sequentially) Tyr-Pro-|-Phe-Pro-|-Gly-Pro-|-Ile.. Its function is as follows. Removes N-terminal dipeptides sequentially from polypeptides having unsubstituted N-termini provided that the penultimate residue is proline. The chain is Xaa-Pro dipeptidyl-peptidase from Streptococcus thermophilus (strain ATCC BAA-250 / LMG 18311).